An 82-amino-acid chain; its full sequence is U1-theraphotoxin-Ct1b (82 aa).

The first 23 residues, 1–23, serve as a signal peptide directing secretion; that stretch reads MRTFTLIAILTCALLVIYHAAEA. Residues 24–44 constitute a propeptide that is removed on maturation; that stretch reads EELEAKDVIESKALATLDEER.

The protein belongs to the neurotoxin 12 (Hwtx-2) family. 03 (juruin) subfamily. Post-translationally, contains 3 disulfide bonds. Two different connectivities are observed in similar proteins (C1-C3, C2-C5, C4-C6 or C1-C4, C2-C5, C3-C6). In terms of tissue distribution, expressed by the venom gland.

It localises to the secreted. Functionally, this toxin causes paralysis and death to sheep blowflies. It does not target insect sodium channels. The sequence is that of U1-theraphotoxin-Ct1b from Coremiocnemis tropix (Australian tarantula spider).